We begin with the raw amino-acid sequence, 369 residues long: uncharacterized protein (369 aa).

The next 9 membrane-spanning stretches (helical) occupy residues 25–45, 47–67, 119–139, 152–172, 206–226, 235–255, 268–288, 295–315, and 323–343; these read QWVI…TVHW, FGLL…LMPE, LNIV…FGVM, ITGF…FSAL, GALH…LFAI, LQAV…TLHL, LLFT…LPLI, LVGF…TTVF, and WVFY…GTVF.

To B.subtilis ComEC.

The protein localises to the cell membrane. This is an uncharacterized protein from Mycoplasma pneumoniae (strain ATCC 29342 / M129 / Subtype 1) (Mycoplasmoides pneumoniae).